Reading from the N-terminus, the 664-residue chain is Type IV inositol polyphosphate 5-phosphatase 3 (664 aa).

The interval 35-76 (GRDPEYGADTDNESENEDAREDNDDSSSDEEGGSGSRGRESK) is disordered. Residues 40 to 66 (YGADTDNESENEDAREDNDDSSSDEEG) show a composition bias toward acidic residues. Catalytic regions lie at residues 514 to 529 (ERIIWLGDLNYRLSSS) and 592 to 607 (PKRTPAWCDRVLSYGK).

This sequence belongs to the inositol polyphosphate 5-phosphatase family.

The catalysed reaction is a 1,2-diacyl-sn-glycero-3-phospho-(1D-myo-inositol-4,5-bisphosphate) + H2O = a 1,2-diacyl-sn-glycero-3-phospho-(1D-myo-inositol 4-phosphate) + phosphate. It catalyses the reaction a 1,2-diacyl-sn-glycero-3-phospho-(1D-myo-inositol-3,4,5-trisphosphate) + H2O = a 1,2-diacyl-sn-glycero-3-phospho-(1D-myo-inositol-3,4-bisphosphate) + phosphate. Functionally, has phosphatase activity toward PtdIns(4,5)P2 and PtdIns(3,4,5)P3. The sequence is that of Type IV inositol polyphosphate 5-phosphatase 3 from Arabidopsis thaliana (Mouse-ear cress).